Reading from the N-terminus, the 249-residue chain is MHTKDQIFAAPIARLGDFCFDEQVVDVFPDMIQRSVPGYSNIISAIGMMAARYAQPQSRLYDLGCSLGAATQAMRRHVTQPGCHITAVDLSHPMIERARAHLSGFKSEVPVELVEADICDIAIENASVVVLNFTLQFVEPEKRAALIQRIFDGLRPGGILILSEKFRFEDAPVNELLIDLHLDFKRANGYSELEISQKRTALENVMRTDSLPVHQARLRDAGFAHQDLWFQCFNFGSMIAIKSSEPAQP.

Residues Tyr-39, Gly-64–Ser-66, Asp-117–Ile-118, Asn-132, and Arg-199 each bind S-adenosyl-L-methionine.

It belongs to the class I-like SAM-binding methyltransferase superfamily. Cx-SAM synthase family. Homodimer.

The enzyme catalyses prephenate + S-adenosyl-L-methionine = carboxy-S-adenosyl-L-methionine + 3-phenylpyruvate + H2O. Catalyzes the conversion of S-adenosyl-L-methionine (SAM) to carboxy-S-adenosyl-L-methionine (Cx-SAM). The polypeptide is Carboxy-S-adenosyl-L-methionine synthase (Aeromonas hydrophila subsp. hydrophila (strain ATCC 7966 / DSM 30187 / BCRC 13018 / CCUG 14551 / JCM 1027 / KCTC 2358 / NCIMB 9240 / NCTC 8049)).